Here is a 508-residue protein sequence, read N- to C-terminus: Maturase K (508 aa).

Belongs to the intron maturase 2 family. MatK subfamily.

It localises to the plastid. It is found in the chloroplast. Its function is as follows. Usually encoded in the trnK tRNA gene intron. Probably assists in splicing its own and other chloroplast group II introns. The polypeptide is Maturase K (Ranunculus glacialis (Glacier buttercup)).